A 359-amino-acid polypeptide reads, in one-letter code: Putative nucleotidyltransferase MAB21L1 (359 aa).

A ribonucleoside 5'-triphosphate contacts are provided by residues 23-24 and 63-66; these read RK and YEGL. Residues glutamate 73 and glutamate 75 each coordinate Mg(2+). Residues lysine 248 and 252–255 each bind a ribonucleoside 5'-triphosphate; that span reads SLLK.

The protein belongs to the mab-21 family. In terms of assembly, monomer. Homodecamer; composed of 2 back to back homopentamers. The protein may exist as monomer in solution and oiligomerizes upon ligand binding.

Its subcellular location is the nucleus. Putative nucleotidyltransferase required for several aspects of embryonic development including normal development of the eye. It is unclear whether it displays nucleotidyltransferase activity in vivo. Binds single-stranded RNA (ssRNA). The protein is Putative nucleotidyltransferase MAB21L1 (mab21l1) of Xenopus laevis (African clawed frog).